A 1651-amino-acid chain; its full sequence is Roundabout homolog 1 (1651 aa).

A signal peptide spans 1-25; that stretch reads MKWKHLPLLVMISLLTLSKKHLLLA. The Extracellular segment spans residues 26–897; the sequence is QLIPDPEDLE…QQISDVVKQP (872 aa). Residues 31 to 66 form a disordered region; that stretch reads PEDLERGNDNGTPAPTSDNDDNSLGYTGSRLRQEDF. The span at 39–56 shows a compositional bias: polar residues; the sequence is DNGTPAPTSDNDDNSLGY. Ig-like C2-type domains follow at residues 68–164, 170–257, 262–346, 351–446, and 455–541; these read PRIV…ASLE, DDFR…ADVT, PSFV…ATLT, PHFV…LEVT, and PVIR…AYIE. C89 and C147 form a disulfide bridge. A glycan (N-linked (GlcNAc...) asparagine) is linked at N160. 3 disulfides stabilise this stretch: C191–C240, C283–C330, and C372–C428. N-linked (GlcNAc...) asparagine glycosylation occurs at N463. C476 and C525 form a disulfide bridge. 3 consecutive Fibronectin type-III domains span residues 563 to 657, 676 to 773, and 778 to 874; these read APSK…TQDV, VVLH…TLEE, and PPRS…LDSH. N790, N820, and N827 each carry an N-linked (GlcNAc...) asparagine glycan. Residues 898–918 traverse the membrane as a helical segment; sequence AFIAGIGAACWIILMVFSIWL. The Cytoplasmic segment spans residues 919-1651; it reads YRHRKKRNGL…NNEELEETES (733 aa). Phosphoserine is present on S940. Position 948 is a phosphothreonine (T948). Position 1038 is a phosphotyrosine (Y1038). Position 1055 is a phosphoserine (S1055). Phosphotyrosine is present on Y1073. A disordered region spans residues 1086–1107; that stretch reads NMNNGGGDSSEKHWKPPGQQKQ. Phosphotyrosine is present on Y1114. Disordered regions lie at residues 1137–1337, 1352–1397, and 1420–1651; these read PYNH…ADME, EQTP…DGSF, and RRQM…ETES. Residues 1147-1163 show a composition bias toward low complexity; sequence GGSYNSSDRGSSTSGSQ. A compositionally biased stretch (pro residues) spans 1186 to 1196; that stretch reads LPPPPAHPPPH. T1240 carries the post-translational modification Phosphothreonine. Positions 1255-1269 are enriched in polar residues; sequence YSHQSTATLTPSPQE. The segment covering 1281-1293 has biased composition (basic and acidic residues); sequence DLGHMPHPPDRRR. Pro residues predominate over residues 1296-1307; sequence VSPPPPPRPISP. At S1297 the chain carries Phosphoserine. The span at 1322–1336 shows a compositional bias: acidic residues; the sequence is MDTDAPEEEEDEADM. Residues 1384 to 1397 are compositionally biased toward low complexity; it reads SSGRSSVSSSDGSF. Polar residues predominate over residues 1438-1451; that stretch reads PRPTSPVSTDSNMS. Positions 1459–1470 are enriched in basic residues; the sequence is RPTKKQKHQPGH. Positions 1480-1490 are enriched in pro residues; that stretch reads LPPPPVPPPAI. Composition is skewed to basic and acidic residues over residues 1516–1541 and 1549–1573; these read ARAD…RQVT and DPRE…RDLP. Residues 1592-1601 show a composition bias toward polar residues; sequence FPTSNNPRDP. A compositionally biased stretch (low complexity) spans 1602 to 1614; the sequence is SSSSSMSSRGSGS. The segment covering 1642 to 1651 has biased composition (acidic residues); sequence NNEELEETES.

The protein belongs to the immunoglobulin superfamily. ROBO family. As to quaternary structure, homodimer. Dimerization is mediated by the extracellular domain and is independent of SLIT liganding. Interacts with SLIT1. Interacts with SLIT2. Interacts with FLRT3. Interacts with MYO9B (via Rho-GAP domain). In terms of processing, ubiquitinated. May be deubiquitinated by USP33. In terms of tissue distribution, expressed in embryonal brain and spinal cord.

The protein resides in the cell membrane. It is found in the cell projection. It localises to the axon. The protein localises to the endoplasmic reticulum-Golgi intermediate compartment membrane. Its function is as follows. Receptor for SLIT1 and SLIT2 that mediates cellular responses to molecular guidance cues in cellular migration, including axonal navigation at the ventral midline of the neural tube and projection of axons to different regions during neuronal development. Interaction with the intracellular domain of FLRT3 mediates axon attraction towards cells expressing NTN1. In axon growth cones, the silencing of the attractive effect of NTN1 by SLIT2 may require the formation of a ROBO1-DCC complex. Plays a role in the regulation of cell migration via its interaction with MYO9B; inhibits MYO9B-mediated stimulation of RHOA GTPase activity, and thereby leads to increased levels of active, GTP-bound RHOA. May be required for lung development. The chain is Roundabout homolog 1 (Robo1) from Rattus norvegicus (Rat).